A 344-amino-acid chain; its full sequence is Ferrochelatase (344 aa).

Fe cation contacts are provided by His-214 and Glu-295.

This sequence belongs to the ferrochelatase family.

The protein resides in the cytoplasm. The catalysed reaction is heme b + 2 H(+) = protoporphyrin IX + Fe(2+). It functions in the pathway porphyrin-containing compound metabolism; protoheme biosynthesis; protoheme from protoporphyrin-IX: step 1/1. Functionally, catalyzes the ferrous insertion into protoporphyrin IX. This is Ferrochelatase from Agrobacterium fabrum (strain C58 / ATCC 33970) (Agrobacterium tumefaciens (strain C58)).